Reading from the N-terminus, the 135-residue chain is Glutaredoxin-C4 (135 aa).

Residues 32–132 (ADFVKKTISS…KLLGVSGNKE (101 aa)) form the Glutaredoxin domain. Cys-52 and Cys-55 form a disulfide bridge.

It belongs to the glutaredoxin family. CPYC subfamily.

It is found in the cytoplasm. In terms of biological role, has a glutathione-disulfide oxidoreductase activity in the presence of NADPH and glutathione reductase. Reduces low molecular weight disulfides and proteins. In Arabidopsis thaliana (Mouse-ear cress), this protein is Glutaredoxin-C4 (GRXC4).